The following is a 288-amino-acid chain: Alpha-acetolactate decarboxylase (288 aa).

A signal peptide spans methionine 1–glycine 23.

This sequence belongs to the alpha-acetolactate decarboxylase family.

The enzyme catalyses (2S)-2-acetolactate + H(+) = (R)-acetoin + CO2. It participates in polyol metabolism; (R,R)-butane-2,3-diol biosynthesis; (R,R)-butane-2,3-diol from pyruvate: step 2/3. In terms of biological role, converts acetolactate into acetoin. This Methanosarcina mazei (strain ATCC BAA-159 / DSM 3647 / Goe1 / Go1 / JCM 11833 / OCM 88) (Methanosarcina frisia) protein is Alpha-acetolactate decarboxylase.